Reading from the N-terminus, the 139-residue chain is 3-hydroxyacyl-[acyl-carrier-protein] dehydratase FabZ (139 aa).

Residue His47 is part of the active site.

It belongs to the thioester dehydratase family. FabZ subfamily.

The protein resides in the cytoplasm. The catalysed reaction is a (3R)-hydroxyacyl-[ACP] = a (2E)-enoyl-[ACP] + H2O. Its function is as follows. Involved in unsaturated fatty acids biosynthesis. Catalyzes the dehydration of short chain beta-hydroxyacyl-ACPs and long chain saturated and unsaturated beta-hydroxyacyl-ACPs. This is 3-hydroxyacyl-[acyl-carrier-protein] dehydratase FabZ from Oenococcus oeni (strain ATCC BAA-331 / PSU-1).